Consider the following 219-residue polypeptide: Peptidyl-tRNA hydrolase (219 aa).

Tyrosine 26 serves as a coordination point for tRNA. Histidine 31 functions as the Proton acceptor in the catalytic mechanism. Residues tyrosine 78, asparagine 80, and asparagine 126 each coordinate tRNA.

Belongs to the PTH family. Monomer.

It is found in the cytoplasm. The catalysed reaction is an N-acyl-L-alpha-aminoacyl-tRNA + H2O = an N-acyl-L-amino acid + a tRNA + H(+). Functionally, hydrolyzes ribosome-free peptidyl-tRNAs (with 1 or more amino acids incorporated), which drop off the ribosome during protein synthesis, or as a result of ribosome stalling. Catalyzes the release of premature peptidyl moieties from peptidyl-tRNA molecules trapped in stalled 50S ribosomal subunits, and thus maintains levels of free tRNAs and 50S ribosomes. This is Peptidyl-tRNA hydrolase from Trichodesmium erythraeum (strain IMS101).